A 317-amino-acid chain; its full sequence is MADQEVLVLRGTLEGHNGWVTSLATTPAHPDLLLSGSRDKTLIKWKLTGGEDNQYGIPKKSFKGHSHIVQDVTISADGAYALSASWDRTLRLWDLETGETTQRFVGHKGDVLSVSIAKNLRQIVSASRDKTVKVWNTIGECMATLTGHNDWVSAVRISPSDQSSTVISASWDKTVKSWDLADYSVNADFIGHTGYISCITLSPDGSLCASAGKDGVIILWDLNKNKTLYTLEAKAEVHALAFSPNRYWLAAATTSGIKIFKLQERSLLDELKPEFAVGATAKDPEAISLAWSADGQNLFAGYTDNVIRVWQVMTPSA.

WD repeat units lie at residues 15-55 (GHNG…DNQY), 64-103 (GHSH…TTQR), 106-146 (GHKG…ATLT), 148-188 (HNDW…VNAD), 191-230 (GHTG…TLYT), 232-272 (EAKA…DELK), and 281-317 (AKDP…TPSA).

It belongs to the WD repeat G protein beta family. Ribosomal protein RACK1 subfamily. Component of the small ribosomal subunit. Mature ribosomes consist of a small (40S) and a large (60S) subunit. The 40S subunit contains about 32 different proteins and 1 molecule of RNA (18S). The 60S subunit contains 45 different proteins and 3 molecules of RNA (25S, 5.8S and 5S).

The protein resides in the cytoplasm. Component of the ribosome, a large ribonucleoprotein complex responsible for the synthesis of proteins in the cell. The small ribosomal subunit (SSU) binds messenger RNAs (mRNAs) and translates the encoded message by selecting cognate aminoacyl-transfer RNA (tRNA) molecules. The large subunit (LSU) contains the ribosomal catalytic site termed the peptidyl transferase center (PTC), which catalyzes the formation of peptide bonds, thereby polymerizing the amino acids delivered by tRNAs into a polypeptide chain. The nascent polypeptides leave the ribosome through a tunnel in the LSU and interact with protein factors that function in enzymatic processing, targeting, and the membrane insertion of nascent chains at the exit of the ribosomal tunnel. Located at the head of the 40S ribosomal subunit in the vicinity of the mRNA exit channel, it serves as a scaffold protein that can recruit other proteins to the ribosome. Involved in the negative regulation of translation of a specific subset of proteins. Plays a role in morphogenesis and pathogenesis. This is Small ribosomal subunit protein RACK1 from Candida albicans (strain SC5314 / ATCC MYA-2876) (Yeast).